The sequence spans 426 residues: Citrate synthase (426 aa).

Active-site residues include H314 and D372.

The protein belongs to the citrate synthase family.

It catalyses the reaction oxaloacetate + acetyl-CoA + H2O = citrate + CoA + H(+). It participates in carbohydrate metabolism; tricarboxylic acid cycle; isocitrate from oxaloacetate: step 1/2. The polypeptide is Citrate synthase (gltA) (Helicobacter pylori (strain J99 / ATCC 700824) (Campylobacter pylori J99)).